Reading from the N-terminus, the 313-residue chain is Protein FixB (313 aa).

255–283 (LYLAVGISGQIQHMVGANASQTIFAINKD) contributes to the FAD binding site.

It belongs to the ETF alpha-subunit/FixB family. In terms of assembly, heterodimer of FixA and FixB.

It functions in the pathway amine and polyamine metabolism; carnitine metabolism. In terms of biological role, required for anaerobic carnitine reduction. May bring reductant to CaiA. The protein is Protein FixB of Escherichia coli O81 (strain ED1a).